The chain runs to 309 residues: MTTFIPIIFSSLVMVMFVTGNFANGFIALVNSIESVKRQKISYADQILTALAVSRIGLLWVLLLNWYSTVLNPAFYSVEVRTTAYNVWAVTGHFSNWLATSLSIFYLLKIANFSNLIFLHLKRRVKSVILVMLLGPLLFLACQLFVINMKEIVQTKEYEGNXTWKIKLRSAVYLSDATVTTLGNLVPFTLTLLCFLLLICSLCKHLKKMQLHGKGSQDPSMKVHIKALQTVTSFLLLCAIYFLSIMISVWSLGSLKNKPVFMFCKAMRFSYPSIHPFILIWGNKKLKQTFLSVLQQVRYWVKGEKPSSP.

The Extracellular segment spans residues 1–2; sequence MT. Residues 3 to 23 form a helical membrane-spanning segment; the sequence is TFIPIIFSSLVMVMFVTGNFA. The Cytoplasmic segment spans residues 24–55; the sequence is NGFIALVNSIESVKRQKISYADQILTALAVSR. Residues 56–76 form a helical membrane-spanning segment; that stretch reads IGLLWVLLLNWYSTVLNPAFY. At 77–100 the chain is on the extracellular side; that stretch reads SVEVRTTAYNVWAVTGHFSNWLAT. A helical transmembrane segment spans residues 101–121; sequence SLSIFYLLKIANFSNLIFLHL. Over 122 to 126 the chain is Cytoplasmic; that stretch reads KRRVK. A helical membrane pass occupies residues 127-147; sequence SVILVMLLGPLLFLACQLFVI. Residues 148-181 lie on the Extracellular side of the membrane; the sequence is NMKEIVQTKEYEGNXTWKIKLRSAVYLSDATVTT. Residue asparagine 161 is glycosylated (N-linked (GlcNAc...) asparagine). A helical membrane pass occupies residues 182-202; it reads LGNLVPFTLTLLCFLLLICSL. The Cytoplasmic segment spans residues 203–229; sequence CKHLKKMQLHGKGSQDPSMKVHIKALQ. A helical transmembrane segment spans residues 230–250; the sequence is TVTSFLLLCAIYFLSIMISVW. Over 251-259 the chain is Extracellular; the sequence is SLGSLKNKP. Residues 260–280 form a helical membrane-spanning segment; sequence VFMFCKAMRFSYPSIHPFILI. The Cytoplasmic segment spans residues 281–309; the sequence is WGNKKLKQTFLSVLQQVRYWVKGEKPSSP.

The protein belongs to the G-protein coupled receptor T2R family.

The protein localises to the membrane. Receptor that may play a role in the perception of bitterness and is gustducin-linked. May play a role in sensing the chemical composition of the gastrointestinal content. The activity of this receptor may stimulate alpha gustducin, mediate PLC-beta-2 activation and lead to the gating of TRPM5. The protein is Taste receptor type 2 member 31 (TAS2R31) of Gorilla gorilla gorilla (Western lowland gorilla).